The following is a 316-amino-acid chain: GTP cyclohydrolase FolE2 1 (316 aa).

The protein belongs to the GTP cyclohydrolase IV family.

It catalyses the reaction GTP + H2O = 7,8-dihydroneopterin 3'-triphosphate + formate + H(+). The protein operates within cofactor biosynthesis; 7,8-dihydroneopterin triphosphate biosynthesis; 7,8-dihydroneopterin triphosphate from GTP: step 1/1. Functionally, converts GTP to 7,8-dihydroneopterin triphosphate. This chain is GTP cyclohydrolase FolE2 1, found in Burkholderia orbicola (strain AU 1054).